The primary structure comprises 175 residues: Translation initiation factor IF-3 (175 aa).

Belongs to the IF-3 family. In terms of assembly, monomer.

The protein resides in the cytoplasm. Its function is as follows. IF-3 binds to the 30S ribosomal subunit and shifts the equilibrium between 70S ribosomes and their 50S and 30S subunits in favor of the free subunits, thus enhancing the availability of 30S subunits on which protein synthesis initiation begins. The sequence is that of Translation initiation factor IF-3 from Staphylococcus aureus (strain MRSA252).